The primary structure comprises 205 residues: MAQINVIGQNGGRTIELPLPEVNSGVLHEVVTWQLASRRRGTASTRTRAQVSKTGRKMYGQKGTGNARHGDRSVPTFVGGGVAFGPKPRSYDYTLPRQVRQLGLAMAIASRQEGGKLVAVDGFDIADAKTKNFISWAKQNGLDGTEKVLLVTDDENTRRAARNVSWVSVLPVAGVNVYDILRHDRLVIDAAALEIVEEEAGEEQQ.

It belongs to the universal ribosomal protein uL4 family. As to quaternary structure, part of the 50S ribosomal subunit. Contacts proteins L15 and L34.

In terms of biological role, one of the primary rRNA binding proteins, this protein initially binds near the 5'-end of the 23S rRNA. It is important during the early stages of 50S assembly. Its function is as follows. Makes multiple contacts with different domains of the 23S rRNA in the assembled 50S subunit. Functionally, this protein is located close to the polypeptide exit tunnel, and interacts with the modified macrolide azithromycin, which blocks the tunnel. The chain is Large ribosomal subunit protein uL4 (rplD) from Deinococcus radiodurans (strain ATCC 13939 / DSM 20539 / JCM 16871 / CCUG 27074 / LMG 4051 / NBRC 15346 / NCIMB 9279 / VKM B-1422 / R1).